A 498-amino-acid chain; its full sequence is L-amino acid oxidase Bs29 (498 aa).

Residues 1–3 (SCA) form the signal peptide. A disulfide bridge connects residues Cys-12 and Cys-175. Residues 45–46 (MS), 65–66 (EA), Arg-73, and 89–92 (GPMR) contribute to the FAD site. Residue Arg-92 coordinates substrate. Asn-174 carries an N-linked (GlcNAc...) asparagine glycan. His-225 is a substrate binding site. An FAD-binding site is contributed by Val-263. An intrachain disulfide couples Cys-333 to Cys-414. Tyr-374 is a substrate binding site. FAD-binding positions include Glu-459 and 466–471 (GWIDST). A substrate-binding site is contributed by 466–467 (GW).

The protein belongs to the flavin monoamine oxidase family. FIG1 subfamily. Monomer. This is in contrast with most of its orthologs, that are non-covalently linked homodimers. FAD serves as cofactor. As to expression, expressed by the venom gland.

The protein resides in the secreted. The catalysed reaction is an L-alpha-amino acid + O2 + H2O = a 2-oxocarboxylate + H2O2 + NH4(+). It carries out the reaction L-leucine + O2 + H2O = 4-methyl-2-oxopentanoate + H2O2 + NH4(+). Catalyzes an oxidative deamination of predominantly hydrophobic and aromatic L-amino acids, thus producing hydrogen peroxide that may contribute to the diverse toxic effects of this enzyme. Shows activity on L-Leu. Damage cell membranes of the Gram-positive bacteria S.aureus (MIC=4 ug/ml and MBC=8 ug/ml) and the Gram-negative bacteria A.baumanni (MIC=2 ug/ml and MBC=4 ug/ml). This antibacterial activity is dependent on the production of hydrogen peroxyde, since it is inhibited by catalase, a hydrogen peroxyde scavenger. The polypeptide is L-amino acid oxidase Bs29 (Bothriechis schlegelii (Eyelash palm pitviper)).